A 406-amino-acid polypeptide reads, in one-letter code: Phosphopentomutase (406 aa).

Residues D10, D305, H310, D346, H347, and H358 each coordinate Mn(2+).

The protein belongs to the phosphopentomutase family. Requires Mn(2+) as cofactor.

It is found in the cytoplasm. It catalyses the reaction 2-deoxy-alpha-D-ribose 1-phosphate = 2-deoxy-D-ribose 5-phosphate. The catalysed reaction is alpha-D-ribose 1-phosphate = D-ribose 5-phosphate. It participates in carbohydrate degradation; 2-deoxy-D-ribose 1-phosphate degradation; D-glyceraldehyde 3-phosphate and acetaldehyde from 2-deoxy-alpha-D-ribose 1-phosphate: step 1/2. Isomerase that catalyzes the conversion of deoxy-ribose 1-phosphate (dRib-1-P) and ribose 1-phosphate (Rib-1-P) to deoxy-ribose 5-phosphate (dRib-5-P) and ribose 5-phosphate (Rib-5-P), respectively. This chain is Phosphopentomutase, found in Methylorubrum extorquens (strain PA1) (Methylobacterium extorquens).